Consider the following 154-residue polypeptide: Aspartate carbamoyltransferase regulatory chain (154 aa).

Zn(2+) is bound by residues Cys109, Cys114, Cys138, and Cys141.

This sequence belongs to the PyrI family. Contains catalytic and regulatory chains. Zn(2+) serves as cofactor.

Its function is as follows. Involved in allosteric regulation of aspartate carbamoyltransferase. In Yersinia pseudotuberculosis serotype O:1b (strain IP 31758), this protein is Aspartate carbamoyltransferase regulatory chain.